We begin with the raw amino-acid sequence, 573 residues long: Potassium-transporting ATPase potassium-binding subunit (573 aa).

A run of 10 helical transmembrane segments spans residues alanine 3–leucine 23, glycine 65–leucine 85, glycine 136–isoleucine 156, leucine 179–proline 199, leucine 254–phenylalanine 274, alanine 286–glutamate 306, alanine 383–valine 403, valine 423–valine 443, glycine 489–alanine 509, and leucine 531–alanine 551.

The protein belongs to the KdpA family. As to quaternary structure, the system is composed of three essential subunits: KdpA, KdpB and KdpC.

The protein localises to the cell inner membrane. Part of the high-affinity ATP-driven potassium transport (or Kdp) system, which catalyzes the hydrolysis of ATP coupled with the electrogenic transport of potassium into the cytoplasm. This subunit binds the periplasmic potassium ions and delivers the ions to the membrane domain of KdpB through an intramembrane tunnel. The chain is Potassium-transporting ATPase potassium-binding subunit from Rhodospirillum centenum (strain ATCC 51521 / SW).